The primary structure comprises 719 residues: DNA replication licensing factor MCM7 (719 aa).

Ala-2 carries the N-acetylalanine modification. Residues Lys-15 and Lys-28 each participate in a glycyl lysine isopeptide (Lys-Gly) (interchain with G-Cter in SUMO2) cross-link. The residue at position 314 (Ser-314) is a Phosphoserine. The MCM domain maps to 332 to 538 (FYEKLAASIA…NDLRLAQHIT (207 aa)). Tyr-345 contributes to the ATP binding site. Ser-365 carries the phosphoserine modification. 5 residues coordinate ATP: Gly-384, Ala-386, Lys-387, Ser-388, and Asn-489. A Phosphoserine modification is found at Ser-500. The short motif at 513 to 516 (SRFD) is the Arginine finger element. An ATP-binding site is contributed by Arg-514. The tract at residues 521 to 564 (IQDRPDRDNDLRLAQHITYVHQHSRQPPAQFEPLDMKLMRRYIA) is interaction with RAD17. The interaction with ATRIP stretch occupies residues 577-719 (LADYITAAYV…NTSRTRITFV (143 aa)). Arg-604 provides a ligand contact to ATP. A Phosphoserine modification is found at Ser-678.

Belongs to the MCM family. As to quaternary structure, component of the MCM2-7 complex. The complex forms a toroidal hexameric ring with the proposed subunit order MCM2-MCM6-MCM4-MCM7-MCM3-MCM5. Component of the CMG helicase complex, a hexameric ring of related MCM2-7 subunits stabilized by CDC45 and the tetrameric GINS complex. Interacts with the ATR-ATRIP complex and with RAD17. Interacts with TIPIN. Interacts with MCMBP. Interacts with ANKRD17. Component of the replisome complex composed of at least DONSON, MCM2, MCM7, PCNA and TICRR. O-glycosylated (O-GlcNAcylated), in a cell cycle-dependent manner. In terms of processing, ubiquitinated by ECS(LRR1) E3 ubiquitin-protein ligase complex when forks converge following formation of DNA interstrand cross-links. During mitosis, ubiquitinated by TRAIP when forks converge following formation of DNA interstrand cross-links. Short ubiquitin chains on MCM7 promote recruitment of DNA glycosylase NEIL3. If the interstrand cross-link cannot be cleaved by NEIL3, the ubiquitin chains continue to grow on MCM7, promoting the unloading of the CMG helicase complex by the VCP/p97 ATPase.

It is found in the nucleus. Its subcellular location is the chromosome. It catalyses the reaction ATP + H2O = ADP + phosphate + H(+). Functionally, acts as a component of the MCM2-7 complex (MCM complex) which is the replicative helicase essential for 'once per cell cycle' DNA replication initiation and elongation in eukaryotic cells. Core component of CDC45-MCM-GINS (CMG) helicase, the molecular machine that unwinds template DNA during replication, and around which the replisome is built. The active ATPase sites in the MCM2-7 ring are formed through the interaction surfaces of two neighboring subunits such that a critical structure of a conserved arginine finger motif is provided in trans relative to the ATP-binding site of the Walker A box of the adjacent subunit. The six ATPase active sites, however, are likely to contribute differentially to the complex helicase activity. Uncomplexed form does not show ATPase or DNA helicase. Required for S-phase checkpoint activation upon UV-induced damage. The protein is DNA replication licensing factor MCM7 (Mcm7) of Mus musculus (Mouse).